The sequence spans 202 residues: FMN-dependent NADH:quinone oxidoreductase (202 aa).

FMN is bound by residues serine 10, 16-18 (SHS), and 96-99 (MYNF).

The protein belongs to the azoreductase type 1 family. In terms of assembly, homodimer. FMN serves as cofactor.

The enzyme catalyses 2 a quinone + NADH + H(+) = 2 a 1,4-benzosemiquinone + NAD(+). The catalysed reaction is N,N-dimethyl-1,4-phenylenediamine + anthranilate + 2 NAD(+) = 2-(4-dimethylaminophenyl)diazenylbenzoate + 2 NADH + 2 H(+). Quinone reductase that provides resistance to thiol-specific stress caused by electrophilic quinones. Its function is as follows. Also exhibits azoreductase activity. Catalyzes the reductive cleavage of the azo bond in aromatic azo compounds to the corresponding amines. In Hydrogenovibrio crunogenus (strain DSM 25203 / XCL-2) (Thiomicrospira crunogena), this protein is FMN-dependent NADH:quinone oxidoreductase.